Here is a 295-residue protein sequence, read N- to C-terminus: Glycine--tRNA ligase alpha subunit (295 aa).

Belongs to the class-II aminoacyl-tRNA synthetase family. Tetramer of two alpha and two beta subunits.

It is found in the cytoplasm. The catalysed reaction is tRNA(Gly) + glycine + ATP = glycyl-tRNA(Gly) + AMP + diphosphate. This is Glycine--tRNA ligase alpha subunit (glyQ) from Bacillus subtilis (strain 168).